Reading from the N-terminus, the 435-residue chain is Glutamine synthetase (435 aa).

The 83-residue stretch at 12 to 94 (KGVKYFMISY…VAADCIMDDA (83 aa)) folds into the GS beta-grasp domain. In terms of domain architecture, GS catalytic spans 100 to 435 (PRVVLKKLVA…EWEHQTTLDV (336 aa)). 4 residues coordinate Mg(2+): E123, E125, E180, and E187. G232 serves as a coordination point for L-glutamate. H236 lines the Mg(2+) pocket. Position 240 (S240) interacts with ATP. The L-glutamate site is built by R291 and R315. 2 residues coordinate ATP: R315 and R320. E328 contributes to the Mg(2+) binding site. L-glutamate is bound at residue R330.

It belongs to the glutamine synthetase family. In terms of assembly, homooctamer. Mg(2+) is required as a cofactor.

The enzyme catalyses L-glutamate + NH4(+) + ATP = L-glutamine + ADP + phosphate + H(+). With respect to regulation, inhibited by methionine sulfoximine, ADP and pyrophosphate, but not by various nitrogen-containing metabolites that inhibit other GS enzymes. In terms of biological role, catalyzes the ATP-dependent biosynthesis of glutamine from glutamate and ammonia. This Rhizobium meliloti (strain 1021) (Ensifer meliloti) protein is Glutamine synthetase.